We begin with the raw amino-acid sequence, 495 residues long: IQ domain-containing protein IQM5 (495 aa).

The segment at 89–122 (ENRGGEEEDERGSSPKRRNRGNLTALSLPAPTPF) is disordered. The 30-residue stretch at 131–160 (LDAAAVTLQKVYKSYRTRRNLADCAVVVEE) folds into the IQ domain.

In terms of tissue distribution, expressed in roots, rosette and cauline leaves, and at lower levels in stems, flowers and siliques.

It is found in the cytoplasm. The protein localises to the nucleus. Functionally, may be involved in biotic and abiotic stress responses. This Arabidopsis thaliana (Mouse-ear cress) protein is IQ domain-containing protein IQM5.